We begin with the raw amino-acid sequence, 594 residues long: Zinc finger protein 37 (594 aa).

The disordered stretch occupies residues 1-253 (MATSEPAESD…KPEKAPGSGK (253 aa)). A Phosphothreonine modification is found at threonine 3. One can recognise a KRAB domain in the interval 3–74 (TSEPAESDAV…GKKASPSSLK (72 aa)). Serine 9 is modified (phosphoserine). A compositionally biased stretch (basic and acidic residues) spans 10–33 (DAVRAKEWEQLEPVQRDVYKDTKL). Polar residues predominate over residues 34–46 (ENCSNPASMGNQD). Basic and acidic residues predominate over residues 89–111 (QQDDEHREEKQKSQSKLTKEVTL). Polar residues predominate over residues 145 to 158 (KSSSRGKNSNQNSD). Basic and acidic residues-rich tracts occupy residues 159–172 (SLKK…DHRK) and 181–234 (VNKD…TGEK). C2H2-type zinc fingers lie at residues 255–277 (YECN…QRTH), 283–305 (YECN…QRTH), 311–324 (YECE…GHKH), 339–361 (YKCN…LRSH), 367–389 (YECK…VRTH), 395–417 (YECN…MRIH), 423–445 (FECN…QRTH), 451–473 (YKCD…MRTH), 479–501 (FECN…QRVH), 507–529 (YECV…QRTH), 535–557 (FECY…QRSH), and 563–585 (YECI…MKIH).

This sequence belongs to the krueppel C2H2-type zinc-finger protein family. In terms of tissue distribution, expressed in testis and brain.

The protein localises to the nucleus. May have a role in regulating spermiogenesis. This is Zinc finger protein 37 (Zfp37) from Mus musculus (Mouse).